The primary structure comprises 208 residues: N-(5'-phosphoribosyl)anthranilate isomerase (208 aa).

This sequence belongs to the TrpF family.

It catalyses the reaction N-(5-phospho-beta-D-ribosyl)anthranilate = 1-(2-carboxyphenylamino)-1-deoxy-D-ribulose 5-phosphate. The protein operates within amino-acid biosynthesis; L-tryptophan biosynthesis; L-tryptophan from chorismate: step 3/5. The polypeptide is N-(5'-phosphoribosyl)anthranilate isomerase (Deinococcus radiodurans (strain ATCC 13939 / DSM 20539 / JCM 16871 / CCUG 27074 / LMG 4051 / NBRC 15346 / NCIMB 9279 / VKM B-1422 / R1)).